The chain runs to 218 residues: Serine/threonine-protein phosphatase 1 (218 aa).

Mn(2+) is bound by residues Asp24, His26, Asp53, and Asn79. His80 serves as the catalytic Proton donor. Residue His187 participates in Mn(2+) binding.

It belongs to the PPP phosphatase family. PP-1 subfamily. It depends on Mn(2+) as a cofactor.

The enzyme catalyses O-phospho-L-seryl-[protein] + H2O = L-seryl-[protein] + phosphate. The catalysed reaction is O-phospho-L-threonyl-[protein] + H2O = L-threonyl-[protein] + phosphate. Its function is as follows. Plays a key role in signaling protein misfolding via the CpxR/CPXA transducing system. It also modulates the phosphorylated status of many phosphoproteins in E.coli, some of which acting as major chaperones. Has been shown, in vitro, to act on Ser, Thr and Tyr-phosphorylated substrates. The protein is Serine/threonine-protein phosphatase 1 (pphA) of Escherichia coli (strain K12).